We begin with the raw amino-acid sequence, 562 residues long: MSLPGLELSQQPIEARRAPPQPTQISLPKGSEWRFEVAFGNTTRVKLLAGTAELFGTELATSQTYTFSGTKAAIYTWHGCTLEVGAGDPVPIGPVGSAPVPPGPGNGGCQVEYIAEETPMAEYANVHFALETMRHDAKAAGRDGPRVLILGPEDAGKTSLAKILTGYATKMGRQPLVVNLDPSEGMLSVPGALTATAFRSMIDVEEGWGSSPMSGPSPIPVKLPLVYFYGLPACLDGDGSYYKAIVSRLALAVTGRMAEDSDAREAGVIIDTPGIIGQGKGASEDVIHHIVTEFSISTILVIGSERLYSTMVKNYDNKPIATSATAAASDERISVVKLTKSGGCVDRDATFMKYVRESQIRSYFFGSPVPSTASSALSLSSTTTGTTMTLSPHTSQVDFNSLSIYSITIATEGEEDEYDPSKFDSFLPGGHEENDHNTSLTGTTSLQPPSGLLPGLRSELPSATTGFPSASTSSTTPFTNLPSPAPMSLANTLLAITNAAPNASLDEVRDASIMGFIYIADVDEKKGQGGKLRLLAPVGGRVPNRAMIWGRKWPGEVVGLIG.

The tract at residues 1 to 27 (MSLPGLELSQQPIEARRAPPQPTQISL) is disordered. ATP contacts are provided by residues E32, K71, and 154–159 (DAGKTS). Residues 415–483 (EDEYDPSKFD…STTPFTNLPS (69 aa)) form a disordered region. Low complexity predominate over residues 445 to 479 (SLQPPSGLLPGLRSELPSATTGFPSASTSSTTPFT).

This sequence belongs to the Clp1 family. Clp1 subfamily. In terms of assembly, component of a pre-mRNA cleavage factor complex. Interacts directly with PCF11.

Its subcellular location is the nucleus. Its function is as follows. Required for endonucleolytic cleavage during polyadenylation-dependent pre-mRNA 3'-end formation. The protein is mRNA cleavage and polyadenylation factor CLP1 of Coccidioides immitis (strain RS) (Valley fever fungus).